Reading from the N-terminus, the 395-residue chain is Putative carbonic anhydrase 1 (395 aa).

An N-terminal signal peptide occupies residues Met1–Ser24. The Alpha-carbonic anhydrase domain occupies Ile42–Arg365. 3 residues coordinate Zn(2+): His139, His141, and His165.

It belongs to the alpha-carbonic anhydrase family. The cofactor is Zn(2+). Component of the acid-insoluble and acid-soluble organic matrix of calcified layers of the shell (at protein level).

It is found in the secreted. The catalysed reaction is hydrogencarbonate + H(+) = CO2 + H2O. Its function is as follows. Reversible hydration of carbon dioxide. In Lottia gigantea (Giant owl limpet), this protein is Putative carbonic anhydrase 1.